The sequence spans 132 residues: Phosphoribosyl-AMP cyclohydrolase (132 aa).

Asp82 is a binding site for Mg(2+). Cys83 is a Zn(2+) binding site. The Mg(2+) site is built by Asp84 and Asp86. Zn(2+)-binding residues include Cys99 and Cys106.

The protein belongs to the PRA-CH family. Homodimer. Mg(2+) is required as a cofactor. The cofactor is Zn(2+).

The protein resides in the cytoplasm. The enzyme catalyses 1-(5-phospho-beta-D-ribosyl)-5'-AMP + H2O = 1-(5-phospho-beta-D-ribosyl)-5-[(5-phospho-beta-D-ribosylamino)methylideneamino]imidazole-4-carboxamide. It participates in amino-acid biosynthesis; L-histidine biosynthesis; L-histidine from 5-phospho-alpha-D-ribose 1-diphosphate: step 3/9. In terms of biological role, catalyzes the hydrolysis of the adenine ring of phosphoribosyl-AMP. This chain is Phosphoribosyl-AMP cyclohydrolase, found in Paramagnetospirillum magneticum (strain ATCC 700264 / AMB-1) (Magnetospirillum magneticum).